The sequence spans 293 residues: Homoserine kinase (293 aa).

Residue 84–94 (PLSRGLGSSSA) coordinates ATP.

This sequence belongs to the GHMP kinase family. Homoserine kinase subfamily.

The protein resides in the cytoplasm. It carries out the reaction L-homoserine + ATP = O-phospho-L-homoserine + ADP + H(+). It functions in the pathway amino-acid biosynthesis; L-threonine biosynthesis; L-threonine from L-aspartate: step 4/5. Catalyzes the ATP-dependent phosphorylation of L-homoserine to L-homoserine phosphate. The sequence is that of Homoserine kinase from Aliarcobacter butzleri (strain RM4018) (Arcobacter butzleri).